Consider the following 252-residue polypeptide: 2-succinyl-6-hydroxy-2,4-cyclohexadiene-1-carboxylate synthase (252 aa).

The protein belongs to the AB hydrolase superfamily. MenH family. As to quaternary structure, monomer.

It carries out the reaction 5-enolpyruvoyl-6-hydroxy-2-succinyl-cyclohex-3-ene-1-carboxylate = (1R,6R)-6-hydroxy-2-succinyl-cyclohexa-2,4-diene-1-carboxylate + pyruvate. It participates in quinol/quinone metabolism; 1,4-dihydroxy-2-naphthoate biosynthesis; 1,4-dihydroxy-2-naphthoate from chorismate: step 3/7. It functions in the pathway quinol/quinone metabolism; menaquinone biosynthesis. Functionally, catalyzes a proton abstraction reaction that results in 2,5-elimination of pyruvate from 2-succinyl-5-enolpyruvyl-6-hydroxy-3-cyclohexene-1-carboxylate (SEPHCHC) and the formation of 2-succinyl-6-hydroxy-2,4-cyclohexadiene-1-carboxylate (SHCHC). In Salmonella heidelberg (strain SL476), this protein is 2-succinyl-6-hydroxy-2,4-cyclohexadiene-1-carboxylate synthase.